We begin with the raw amino-acid sequence, 143 residues long: Hemoglobin subunit alpha (143 aa).

Position 2 is an N-acetylserine (Ser-2). In terms of domain architecture, Globin spans 2 to 143 (SLSDKDKSAV…VALALAEKYR (142 aa)). His-60 provides a ligand contact to O2. Residue His-89 participates in heme b binding.

This sequence belongs to the globin family. In terms of assembly, heterotetramer of two alpha chains and two beta chains. Red blood cells.

Involved in oxygen transport from gills to the various peripheral tissues. This chain is Hemoglobin subunit alpha (hba), found in Pogonophryne scotti (Saddleback plunderfish).